We begin with the raw amino-acid sequence, 379 residues long: Arginine biosynthesis bifunctional protein ArgJ (379 aa).

Positions 141, 163, 174, 252, 374, and 379 each coordinate substrate. Threonine 174 functions as the Nucleophile in the catalytic mechanism.

It belongs to the ArgJ family. Heterotetramer of two alpha and two beta chains.

It is found in the cytoplasm. It carries out the reaction N(2)-acetyl-L-ornithine + L-glutamate = N-acetyl-L-glutamate + L-ornithine. The catalysed reaction is L-glutamate + acetyl-CoA = N-acetyl-L-glutamate + CoA + H(+). Its pathway is amino-acid biosynthesis; L-arginine biosynthesis; L-ornithine and N-acetyl-L-glutamate from L-glutamate and N(2)-acetyl-L-ornithine (cyclic): step 1/1. It participates in amino-acid biosynthesis; L-arginine biosynthesis; N(2)-acetyl-L-ornithine from L-glutamate: step 1/4. Functionally, catalyzes two activities which are involved in the cyclic version of arginine biosynthesis: the synthesis of N-acetylglutamate from glutamate and acetyl-CoA as the acetyl donor, and of ornithine by transacetylation between N(2)-acetylornithine and glutamate. In Aquifex aeolicus (strain VF5), this protein is Arginine biosynthesis bifunctional protein ArgJ.